Reading from the N-terminus, the 504-residue chain is Maturase K (504 aa).

Belongs to the intron maturase 2 family. MatK subfamily.

It localises to the plastid. It is found in the chloroplast. Its function is as follows. Usually encoded in the trnK tRNA gene intron. Probably assists in splicing its own and other chloroplast group II introns. This Vigna unguiculata (Cowpea) protein is Maturase K.